The primary structure comprises 1300 residues: Zinc finger protein 536 (1300 aa).

2 disordered regions span residues 1–26 (MEEASLCLGVSSAEPEAEPHLSGPVL) and 47–77 (FPELHPRPNPEEKPPASLEEKAHVPMSGQPM). The segment covering 48–69 (PELHPRPNPEEKPPASLEEKAH) has biased composition (basic and acidic residues). C2H2-type zinc fingers lie at residues 130–152 (YPCPLCGKRFRFNSILSLHMRTH), 158–180 (FKCPYCDHRAAQKGNLKIHLRTH), 274–297 (FRCTFCKGKFKKREELDRHIRILH), 300–323 (YKCTLCDFAASQEEELISHVEKAH), 345–367 (FRCEVCGQVFSQAWFLKGHMRKH), and 373–395 (HCCQICGRRFKEPWFLKNHMKVH). Disordered regions lie at residues 584–604 (HSTKVGSQRDLPSKLDPLESS) and 650–739 (SRVH…QQPA). The span at 594–604 (LPSKLDPLESS) shows a compositional bias: basic and acidic residues. A C2H2-type 7 zinc finger spans residues 631–653 (TECPDCGRVFRTYHQVVVHSRVH). Residues 657-674 (RKGEEDGLHVGLDERRGS) show a composition bias toward basic and acidic residues. The span at 675 to 696 (GSDQESQSVSRSTTPGSSNVTE) shows a compositional bias: polar residues. 2 C2H2-type zinc fingers span residues 751 to 773 (KDCPYCGKTFRTSHHLKVHLRIH) and 779 to 801 (YKCPHCDYAGTQSASLKYHLERH). The disordered stretch occupies residues 802 to 826 (HRERQNGAGPLSGQPPNQDHKDEMS). A phosphoserine mark is found at S826 and S827. A compositionally biased stretch (polar residues) spans 856–880 (SQQWTSGVLSSGDHSGQATGMSSEV). Disordered stretches follow at residues 856–893 (SQQWTSGVLSSGDHSGQATGMSSEVPSDALKGTDLPSK), 937–985 (KDKA…PDAA), and 1124–1260 (SGAS…SLDK). Basic and acidic residues-rich tracts occupy residues 950-972 (HGVDGGEEKPSGKSSQRKSEKSQ) and 1133-1143 (KEPDGKAHSEE). Composition is skewed to acidic residues over residues 1160-1170 (DLSDIASSEDM) and 1178-1187 (NDEEDVETEP). Over residues 1194–1209 (LSALSKDSSSDGGDSL) the composition is skewed to low complexity.

The protein belongs to the krueppel C2H2-type zinc-finger protein family.

The protein resides in the nucleus. In terms of biological role, transcriptional repressor that negatively regulates neuron differentiation by repressing retinoic acid-induced gene transcription. Binds and interrupts RARA from binding to retinoic acid response elements (RARE) composed of tandem 5'-AGGTCA-3' sites known as DR1-DR5. Recognizes and binds 2 copies of the core DNA sequence 5'-CCCCCA-3'. This chain is Zinc finger protein 536 (ZNF536), found in Homo sapiens (Human).